The sequence spans 188 residues: UPF0461 protein C5orf24 homolog (188 aa).

Ser-37 is subject to Phosphoserine. A Glycyl lysine isopeptide (Lys-Gly) (interchain with G-Cter in SUMO2) cross-link involves residue Lys-75. The tract at residues 79 to 142 (KKKKNLNRSG…GYKVSPGRPP (64 aa)) is disordered. A compositionally biased stretch (basic residues) spans 80–92 (KKKNLNRSGKRGR). A compositionally biased stretch (polar residues) spans 94-107 (SGTTKSAGYRTSTG). Phosphoserine is present on residues Ser-121 and Ser-180. Lys-184 participates in a covalent cross-link: Glycyl lysine isopeptide (Lys-Gly) (interchain with G-Cter in SUMO2).

This sequence belongs to the UPF0461 family.

This is UPF0461 protein C5orf24 homolog from Bos taurus (Bovine).